A 1068-amino-acid chain; its full sequence is Carbamoyl phosphate synthase large chain (1068 aa).

Residues Met-1–Glu-401 form a carboxyphosphate synthetic domain region. Arg-129, Arg-169, Gly-175, Gly-176, Lys-208, Val-210, Glu-215, Gly-241, Ile-242, His-243, Gln-284, and Glu-298 together coordinate ATP. Residues Arg-133–Leu-327 enclose the ATP-grasp 1 domain. Mg(2+)-binding residues include Gln-284, Glu-298, and Asn-300. Mn(2+) is bound by residues Gln-284, Glu-298, and Asn-300. The oligomerization domain stretch occupies residues Ile-402–Val-549. Positions Glu-550–Asn-932 are carbamoyl phosphate synthetic domain. In terms of domain architecture, ATP-grasp 2 spans Asp-674–Leu-864. ATP contacts are provided by Arg-710, Lys-749, Leu-751, Glu-755, Gly-780, Val-781, His-782, Ser-783, Gln-823, and Glu-835. Mg(2+)-binding residues include Gln-823, Glu-835, and Asn-837. Mn(2+) is bound by residues Gln-823, Glu-835, and Asn-837. The MGS-like domain occupies Met-933–Asn-1068. Residues Met-933–Asn-1068 are allosteric domain.

The protein belongs to the CarB family. Composed of two chains; the small (or glutamine) chain promotes the hydrolysis of glutamine to ammonia, which is used by the large (or ammonia) chain to synthesize carbamoyl phosphate. Tetramer of heterodimers (alpha,beta)4. Mg(2+) serves as cofactor. The cofactor is Mn(2+).

It carries out the reaction hydrogencarbonate + L-glutamine + 2 ATP + H2O = carbamoyl phosphate + L-glutamate + 2 ADP + phosphate + 2 H(+). The enzyme catalyses hydrogencarbonate + NH4(+) + 2 ATP = carbamoyl phosphate + 2 ADP + phosphate + 2 H(+). Its pathway is amino-acid biosynthesis; L-arginine biosynthesis; carbamoyl phosphate from bicarbonate: step 1/1. The protein operates within pyrimidine metabolism; UMP biosynthesis via de novo pathway; (S)-dihydroorotate from bicarbonate: step 1/3. In terms of biological role, large subunit of the glutamine-dependent carbamoyl phosphate synthetase (CPSase). CPSase catalyzes the formation of carbamoyl phosphate from the ammonia moiety of glutamine, carbonate, and phosphate donated by ATP, constituting the first step of 2 biosynthetic pathways, one leading to arginine and/or urea and the other to pyrimidine nucleotides. The large subunit (synthetase) binds the substrates ammonia (free or transferred from glutamine from the small subunit), hydrogencarbonate and ATP and carries out an ATP-coupled ligase reaction, activating hydrogencarbonate by forming carboxy phosphate which reacts with ammonia to form carbamoyl phosphate. In Clostridium botulinum (strain Loch Maree / Type A3), this protein is Carbamoyl phosphate synthase large chain.